The following is a 302-amino-acid chain: MFWFKNVMIYRLTSPLSLESHSLEDQLQQTKFTPCSQSDMSKFGWSSPLSGSELLHFSQSKQFLLVSHKEDKLLPANVIKKETEERIAVLEEKEARKLKKTEKQAIKDDVVAMLLPRAFSKHQFTAIWLDLDAQLVYVDAGSSKRAEDTLALLRKTLGSLPVVPISFALLPSEVMTNWIAKGHTPNWLNLLEEAELKSFDTDSVVRCKRQDLESEEIAQHLQASKFVTKLAIDWENHFSCVLNEDATLSRVKFADEVREKNDDILKEDIAQRFDADLLLMTEELKLFTQKMIEEFGGIKERI.

Belongs to the RdgC family.

The protein localises to the cytoplasm. It is found in the nucleoid. May be involved in recombination. This chain is Recombination-associated protein RdgC, found in Actinobacillus pleuropneumoniae serotype 5b (strain L20).